A 375-amino-acid polypeptide reads, in one-letter code: Probable pectin lyase C (375 aa).

The first 20 residues, 1-20 (MKITSTIPAVLLGLAPLSAA), serve as a signal peptide directing secretion. 2 disulfides stabilise this stretch: C83–C100 and C92–C220. R250 is an active-site residue. A disulfide bridge connects residues C317 and C325.

The protein belongs to the polysaccharide lyase 1 family.

Its subcellular location is the secreted. It catalyses the reaction Eliminative cleavage of (1-&gt;4)-alpha-D-galacturonan methyl ester to give oligosaccharides with 4-deoxy-6-O-methyl-alpha-D-galact-4-enuronosyl groups at their non-reducing ends.. Its function is as follows. Pectinolytic enzymes consist of four classes of enzymes: pectin lyase, polygalacturonase, pectin methylesterase and rhamnogalacturonase. Among pectinolytic enzymes, pectin lyase is the most important in depolymerization of pectin, since it cleaves internal glycosidic bonds of highly methylated pectins. The chain is Probable pectin lyase C (pelC) from Aspergillus oryzae (strain ATCC 42149 / RIB 40) (Yellow koji mold).